Reading from the N-terminus, the 126-residue chain is Aspartate 1-decarboxylase (126 aa).

The active-site Schiff-base intermediate with substrate; via pyruvic acid is Ser-25. Position 25 is a pyruvic acid (Ser) (Ser-25). Substrate is bound at residue Thr-57. Tyr-58 functions as the Proton donor in the catalytic mechanism. Residue 73–75 participates in substrate binding; that stretch reads GAA.

The protein belongs to the PanD family. Heterooctamer of four alpha and four beta subunits. Pyruvate is required as a cofactor. Is synthesized initially as an inactive proenzyme, which is activated by self-cleavage at a specific serine bond to produce a beta-subunit with a hydroxyl group at its C-terminus and an alpha-subunit with a pyruvoyl group at its N-terminus.

It is found in the cytoplasm. It carries out the reaction L-aspartate + H(+) = beta-alanine + CO2. It participates in cofactor biosynthesis; (R)-pantothenate biosynthesis; beta-alanine from L-aspartate: step 1/1. Its function is as follows. Catalyzes the pyruvoyl-dependent decarboxylation of aspartate to produce beta-alanine. The protein is Aspartate 1-decarboxylase of Alcanivorax borkumensis (strain ATCC 700651 / DSM 11573 / NCIMB 13689 / SK2).